The primary structure comprises 643 residues: uncharacterized protein (643 aa).

Residues 561–643 (LNQELETSSE…GADRKKRGVY (83 aa)) are disordered. Over residues 591–606 (SRGGRGGRGARGGNRG) the composition is skewed to gly residues. Over residues 617-635 (GHDRQMKEKHKSDIKQRGA) the composition is skewed to basic and acidic residues.

This is an uncharacterized protein from Caenorhabditis elegans.